Consider the following 292-residue polypeptide: Tubulin beta chain (292 aa).

Asparagine 49 and asparagine 71 together coordinate GTP. The interval 265–292 (SEYQQYQDATAEEEGEFDEEEEGDEEAA) is disordered. Residues 274-292 (TAEEEGEFDEEEEGDEEAA) are compositionally biased toward acidic residues.

The protein belongs to the tubulin family. In terms of assembly, dimer of alpha and beta chains. A typical microtubule is a hollow water-filled tube with an outer diameter of 25 nm and an inner diameter of 15 nM. Alpha-beta heterodimers associate head-to-tail to form protofilaments running lengthwise along the microtubule wall with the beta-tubulin subunit facing the microtubule plus end conferring a structural polarity. Microtubules usually have 13 protofilaments but different protofilament numbers can be found in some organisms and specialized cells. It depends on Mg(2+) as a cofactor.

The protein localises to the cytoplasm. It is found in the cytoskeleton. Functionally, tubulin is the major constituent of microtubules, a cylinder consisting of laterally associated linear protofilaments composed of alpha- and beta-tubulin heterodimers. Microtubules grow by the addition of GTP-tubulin dimers to the microtubule end, where a stabilizing cap forms. Below the cap, tubulin dimers are in GDP-bound state, owing to GTPase activity of alpha-tubulin. The protein is Tubulin beta chain of Strongylocentrotus purpuratus (Purple sea urchin).